Here is a 128-residue protein sequence, read N- to C-terminus: Large ribosomal subunit protein eL8 (128 aa).

The protein belongs to the eukaryotic ribosomal protein eL8 family. In terms of assembly, part of the 50S ribosomal subunit. Probably part of the RNase P complex.

It localises to the cytoplasm. Its function is as follows. Multifunctional RNA-binding protein that recognizes the K-turn motif in ribosomal RNA, the RNA component of RNase P, box H/ACA, box C/D and box C'/D' sRNAs. The sequence is that of Large ribosomal subunit protein eL8 from Nitrosopumilus maritimus (strain SCM1).